We begin with the raw amino-acid sequence, 348 residues long: Fe(3+) ions import ATP-binding protein FbpC (348 aa).

The region spanning 7–237 (VELRNVTKRF…PASRFMASFM (231 aa)) is the ABC transporter domain. Position 39–46 (39–46 (GPSGCGKT)) interacts with ATP.

This sequence belongs to the ABC transporter superfamily. Fe(3+) ion importer (TC 3.A.1.10) family. As to quaternary structure, the complex is composed of two ATP-binding proteins (FbpC), two transmembrane proteins (FbpB) and a solute-binding protein (FbpA).

It localises to the cell inner membrane. It catalyses the reaction Fe(3+)(out) + ATP + H2O = Fe(3+)(in) + ADP + phosphate + H(+). Part of the ABC transporter complex FbpABC involved in Fe(3+) ions import. Responsible for energy coupling to the transport system. The polypeptide is Fe(3+) ions import ATP-binding protein FbpC (Escherichia coli (strain K12)).